The primary structure comprises 343 residues: Phospholipid phosphatase-related protein type 2 (343 aa).

A run of 3 helical transmembrane segments spans residues Phe12–Leu32, Ala72–Ala92, and Phe129–Val149. N-linked (GlcNAc...) asparagine glycosylation occurs at Asn165. 3 helical membrane passes run Ala210–Val230, Ser239–Tyr259, and Val266–His286. Residues Arg291–Thr343 are disordered. Ser299 and Ser312 each carry phosphoserine. Positions Gly322 to Arg335 are enriched in basic residues.

The protein belongs to the PA-phosphatase related phosphoesterase family.

The protein resides in the membrane. In Mus musculus (Mouse), this protein is Phospholipid phosphatase-related protein type 2.